The sequence spans 113 residues: Large ribosomal subunit protein bL19 (113 aa).

This sequence belongs to the bacterial ribosomal protein bL19 family.

Its function is as follows. This protein is located at the 30S-50S ribosomal subunit interface and may play a role in the structure and function of the aminoacyl-tRNA binding site. This chain is Large ribosomal subunit protein bL19, found in Mycolicibacterium gilvum (strain PYR-GCK) (Mycobacterium gilvum (strain PYR-GCK)).